We begin with the raw amino-acid sequence, 361 residues long: Ankyrin repeat domain-containing protein 16 (361 aa).

ANK repeat units lie at residues 36-66, 70-99, 103-132, 136-165, 170-200, 204-233, 238-268, 273-302, and 306-335; these read AGDTLLHCAARHGRQDILAYLVEAWSMDIEA, DYKRPLHEAASMGHRDCVRYLLGRGAVVDS, ADWTPLMMACTRKNLDVIQDLVEHGANPLL, DGWNSFHIASREGHPVILRYLLTVCPDAWK, IRRTPLHTAAMHGCLEAVQVLLERCHYEPDC, CGVTPFMDAIQCGHVSIAKLLLEQHKACSS, MGAQALHRAAVTGQDEAIRFLVCGLGIDVDV, SQLTALHYAAKEGQTNTVQTLLSLGADINS, and RNRSVLHLACAGQHVACTRLLLQSGLKDSE.

As to quaternary structure, interacts with AARS; the interaction is direct. In terms of tissue distribution, widely expressed in brain (at protein level).

It is found in the cytoplasm. The protein localises to the nucleus. In terms of biological role, required to prevent the misactivation of serine (Ser) with tRNA(Ala) by promoting the hydrolysis of Ser-mischarged tRNA(Ala), thereby playing a role in translational fidelity. Binds directly to the catalytic domain of AARS/AlaRS and captures Ser that is misactivated by AARS/AlaRS, preventing the charging of Ser adenylates to tRNA(Ala) and precluding Ser misincorporation in nascent peptides. This is Ankyrin repeat domain-containing protein 16 from Mus musculus (Mouse).